The chain runs to 222 residues: Alpha-S2-casein (222 aa).

An N-terminal signal peptide occupies residues 1–15; it reads MKFFIFTCLLAVALA. A phosphoserine mark is found at Ser23, Ser24, Ser25, Ser28, Ser46, Ser71, Ser72, Ser73, Ser76, Ser144, Ser146, Ser150, and Ser158. A repeat spans 76 to 140; it reads SAEVATEEVK…AVPITPTLNR (65 aa). The segment at residues 158 to 222 is a repeat; sequence STEVFTKKTK…TKVIPYVRYL (65 aa).

The protein belongs to the alpha-casein family. Mammary gland specific. Secreted in milk.

The protein localises to the secreted. In terms of biological role, important role in the capacity of milk to transport calcium phosphate. Its function is as follows. Casocidin-I inhibits the growth of E.coli and S.carnosus. In Bos taurus (Bovine), this protein is Alpha-S2-casein (CSN1S2).